A 358-amino-acid chain; its full sequence is 7,8-didemethyl-8-hydroxy-5-deazariboflavin synthase (358 aa).

A Radical SAM core domain is found at 35-275 (ITYSKNVFIP…DDISIQIPPN (241 aa)). [4Fe-4S] cluster contacts are provided by C49, C53, and C56.

It belongs to the radical SAM superfamily. CofG family. Consists of two subunits, CofG and CofH. Requires [4Fe-4S] cluster as cofactor.

The enzyme catalyses 5-amino-5-(4-hydroxybenzyl)-6-(D-ribitylimino)-5,6-dihydrouracil + S-adenosyl-L-methionine = 7,8-didemethyl-8-hydroxy-5-deazariboflavin + 5'-deoxyadenosine + L-methionine + NH4(+) + H(+). Its pathway is cofactor biosynthesis; coenzyme F0 biosynthesis. In terms of biological role, catalyzes the radical-mediated synthesis of 7,8-didemethyl-8-hydroxy-5-deazariboflavin (FO) from 5-amino-5-(4-hydroxybenzyl)-6-(D-ribitylimino)-5,6-dihydrouracil. The polypeptide is 7,8-didemethyl-8-hydroxy-5-deazariboflavin synthase (cofG) (Methanocaldococcus jannaschii (strain ATCC 43067 / DSM 2661 / JAL-1 / JCM 10045 / NBRC 100440) (Methanococcus jannaschii)).